The chain runs to 237 residues: MGFGKPRGGGGGGGRGFGGGGGGGGRGFGGGGGGRGGGGGRGGGGGFGRGGGGRGGGRGAFDTGPPERVIPLGNYVYSCQNDLVCKVDIQDVPYFNAPIFLENKEQVGKIDEIFGTVRDYSVSIKLSDNVYANSFKPNQKLFIDPGKLLPIARFLPKPPQPKGAKKAFTNNRGGGGGGGGFGGRGGGRGGGGRGGGGGRGGGGFRGGAGRNGGGGGGGGFNRGRGGGGGGGGGRGRW.

Composition is skewed to gly residues over residues 1 to 59 (MGFG…GGRG) and 172 to 237 (RGGG…RGRW). Disordered regions lie at residues 1 to 64 (MGFG…FDTG) and 157 to 237 (KPPQ…RGRW). 2 RGG-box regions span residues 4-56 (GKPR…GRGG) and 166-236 (KAFT…GRGR).

The protein belongs to the GAR1 family. In terms of assembly, component of the box H/ACA small nucleolar ribonucleoprotein (H/ACA snoRNP) complex consisting of Nop60B, Gar1, NPH2 and Nop10, and associated with H/ACA-type snoRNAs.

The protein resides in the nucleus. It localises to the nucleolus. Functionally, component of the box H/ACA small nucleolar ribonucleoprotein (H/ACA snoRNP) complex, which catalyzes pseudouridylation of rRNA. This involves the isomerization of uridine such that the ribose is subsequently attached to C5, instead of the normal N1. Pseudouridine ('psi') residues may serve to stabilize the conformation of rRNAs. Required for ribosome biogenesis. H/ACA snoRNP complex-dependent ribosome biogenesis is important in female germline cell differentiation during oogenesis. In Drosophila melanogaster (Fruit fly), this protein is H/ACA ribonucleoprotein complex subunit 1.